The sequence spans 430 residues: Dihydroorotase (430 aa).

Residues H60 and H62 each coordinate Zn(2+). Substrate is bound by residues 62–64 (HLR) and N94. Residues D152, H179, H232, and D305 each contribute to the Zn(2+) site. D305 is a catalytic residue. Substrate contacts are provided by residues H309 and 323–324 (FG).

Belongs to the metallo-dependent hydrolases superfamily. DHOase family. Class I DHOase subfamily. Requires Zn(2+) as cofactor.

The enzyme catalyses (S)-dihydroorotate + H2O = N-carbamoyl-L-aspartate + H(+). It functions in the pathway pyrimidine metabolism; UMP biosynthesis via de novo pathway; (S)-dihydroorotate from bicarbonate: step 3/3. Functionally, catalyzes the reversible cyclization of carbamoyl aspartate to dihydroorotate. The chain is Dihydroorotase from Solibacter usitatus (strain Ellin6076).